A 240-amino-acid polypeptide reads, in one-letter code: Ribonuclease PH (240 aa).

Residues Arg87 and 125–127 (GTR) contribute to the phosphate site.

The protein belongs to the RNase PH family. As to quaternary structure, homohexameric ring arranged as a trimer of dimers.

The catalysed reaction is tRNA(n+1) + phosphate = tRNA(n) + a ribonucleoside 5'-diphosphate. Its function is as follows. Phosphorolytic 3'-5' exoribonuclease that plays an important role in tRNA 3'-end maturation. Removes nucleotide residues following the 3'-CCA terminus of tRNAs; can also add nucleotides to the ends of RNA molecules by using nucleoside diphosphates as substrates, but this may not be physiologically important. Probably plays a role in initiation of 16S rRNA degradation (leading to ribosome degradation) during starvation. The chain is Ribonuclease PH from Pseudomonas putida (strain GB-1).